A 556-amino-acid polypeptide reads, in one-letter code: Urocanate hydratase (556 aa).

NAD(+) contacts are provided by residues 52–53, Q130, 176–178, E196, R201, 242–243, 263–267, 273–274, and Y322; these read GG, GMG, NA, QTSAH, and YL. The active site involves C410. Residue G492 participates in NAD(+) binding.

This sequence belongs to the urocanase family. Requires NAD(+) as cofactor.

The protein resides in the cytoplasm. The enzyme catalyses 4-imidazolone-5-propanoate = trans-urocanate + H2O. The protein operates within amino-acid degradation; L-histidine degradation into L-glutamate; N-formimidoyl-L-glutamate from L-histidine: step 2/3. Catalyzes the conversion of urocanate to 4-imidazolone-5-propionate. This Shewanella sp. (strain ANA-3) protein is Urocanate hydratase.